Consider the following 89-residue polypeptide: Large ribosomal subunit protein bL27 (89 aa).

The interval 1–23 is disordered; sequence MAHKKAGGSSRNGRDSHSKRLGV.

Belongs to the bacterial ribosomal protein bL27 family.

The sequence is that of Large ribosomal subunit protein bL27 from Mesorhizobium japonicum (strain LMG 29417 / CECT 9101 / MAFF 303099) (Mesorhizobium loti (strain MAFF 303099)).